We begin with the raw amino-acid sequence, 433 residues long: 3-phosphoshikimate 1-carboxyvinyltransferase (433 aa).

Residues Lys-22, Ser-23, and Arg-27 each contribute to the 3-phosphoshikimate site. Lys-22 contributes to the phosphoenolpyruvate binding site. The phosphoenolpyruvate site is built by Gly-95 and Arg-123. Ser-167, Gln-169, Asp-315, and Lys-342 together coordinate 3-phosphoshikimate. Gln-169 is a binding site for phosphoenolpyruvate. Asp-315 acts as the Proton acceptor in catalysis. Arg-346 and Arg-387 together coordinate phosphoenolpyruvate.

It belongs to the EPSP synthase family. As to quaternary structure, monomer.

It is found in the cytoplasm. It catalyses the reaction 3-phosphoshikimate + phosphoenolpyruvate = 5-O-(1-carboxyvinyl)-3-phosphoshikimate + phosphate. It participates in metabolic intermediate biosynthesis; chorismate biosynthesis; chorismate from D-erythrose 4-phosphate and phosphoenolpyruvate: step 6/7. In terms of biological role, catalyzes the transfer of the enolpyruvyl moiety of phosphoenolpyruvate (PEP) to the 5-hydroxyl of shikimate-3-phosphate (S3P) to produce enolpyruvyl shikimate-3-phosphate and inorganic phosphate. The sequence is that of 3-phosphoshikimate 1-carboxyvinyltransferase from Legionella pneumophila subsp. pneumophila (strain Philadelphia 1 / ATCC 33152 / DSM 7513).